The primary structure comprises 466 residues: Cysteine--tRNA ligase (466 aa).

Cys28 contacts Zn(2+). The short motif at 30 to 40 is the 'HIGH' region element; the sequence is PTVYNYIHIGN. 3 residues coordinate Zn(2+): Cys208, His233, and Glu237. The short motif at 265–269 is the 'KMSKS' region element; the sequence is KMSKS. Lys268 serves as a coordination point for ATP.

Belongs to the class-I aminoacyl-tRNA synthetase family. Monomer. Zn(2+) serves as cofactor.

It is found in the cytoplasm. The catalysed reaction is tRNA(Cys) + L-cysteine + ATP = L-cysteinyl-tRNA(Cys) + AMP + diphosphate. The chain is Cysteine--tRNA ligase from Staphylococcus aureus (strain Mu3 / ATCC 700698).